Here is a 214-residue protein sequence, read N- to C-terminus: Phosphatidylserine decarboxylase proenzyme (214 aa).

Residue Ser183 is the Schiff-base intermediate with substrate; via pyruvic acid of the active site. Ser183 carries the post-translational modification Pyruvic acid (Ser); by autocatalysis.

This sequence belongs to the phosphatidylserine decarboxylase family. PSD-A subfamily. In terms of assembly, heterodimer of a large membrane-associated beta subunit and a small pyruvoyl-containing alpha subunit. Pyruvate serves as cofactor. Is synthesized initially as an inactive proenzyme. Formation of the active enzyme involves a self-maturation process in which the active site pyruvoyl group is generated from an internal serine residue via an autocatalytic post-translational modification. Two non-identical subunits are generated from the proenzyme in this reaction, and the pyruvate is formed at the N-terminus of the alpha chain, which is derived from the carboxyl end of the proenzyme. The post-translation cleavage follows an unusual pathway, termed non-hydrolytic serinolysis, in which the side chain hydroxyl group of the serine supplies its oxygen atom to form the C-terminus of the beta chain, while the remainder of the serine residue undergoes an oxidative deamination to produce ammonia and the pyruvoyl prosthetic group on the alpha chain.

The protein localises to the cell membrane. The catalysed reaction is a 1,2-diacyl-sn-glycero-3-phospho-L-serine + H(+) = a 1,2-diacyl-sn-glycero-3-phosphoethanolamine + CO2. It functions in the pathway phospholipid metabolism; phosphatidylethanolamine biosynthesis; phosphatidylethanolamine from CDP-diacylglycerol: step 2/2. Functionally, catalyzes the formation of phosphatidylethanolamine (PtdEtn) from phosphatidylserine (PtdSer). In Chlorobaculum parvum (strain DSM 263 / NCIMB 8327) (Chlorobium vibrioforme subsp. thiosulfatophilum), this protein is Phosphatidylserine decarboxylase proenzyme.